We begin with the raw amino-acid sequence, 299 residues long: ATP phosphoribosyltransferase (299 aa).

Belongs to the ATP phosphoribosyltransferase family. Long subfamily. It depends on Mg(2+) as a cofactor.

Its subcellular location is the cytoplasm. The catalysed reaction is 1-(5-phospho-beta-D-ribosyl)-ATP + diphosphate = 5-phospho-alpha-D-ribose 1-diphosphate + ATP. Its pathway is amino-acid biosynthesis; L-histidine biosynthesis; L-histidine from 5-phospho-alpha-D-ribose 1-diphosphate: step 1/9. Feedback inhibited by histidine. In terms of biological role, catalyzes the condensation of ATP and 5-phosphoribose 1-diphosphate to form N'-(5'-phosphoribosyl)-ATP (PR-ATP). Has a crucial role in the pathway because the rate of histidine biosynthesis seems to be controlled primarily by regulation of HisG enzymatic activity. The chain is ATP phosphoribosyltransferase from Campylobacter jejuni subsp. jejuni serotype O:23/36 (strain 81-176).